The sequence spans 134 residues: Probable salivary secreted peptide (134 aa).

The N-terminal stretch at 1-24 (MGAQKTIAYLAIIAIAVIFAQVNT) is a signal peptide.

The protein localises to the secreted. The chain is Probable salivary secreted peptide from Bombus ignitus (Bumblebee).